We begin with the raw amino-acid sequence, 341 residues long: HTH-type transcriptional repressor PurR (341 aa).

In terms of domain architecture, HTH lacI-type spans 2–56 (ATIKDVAKHAGVSTTTVSHVINKTRFVAENTKAAVWAAIKELHYSPSAVARSLKV). Residues 4 to 23 (IKDVAKHAGVSTTTVSHVIN) constitute a DNA-binding region (H-T-H motif). Residues 48–56 (SAVARSLKV) mediate DNA binding. Hypoxanthine is bound by residues tyrosine 73, arginine 190, threonine 192, phenylalanine 221, and aspartate 275.

In terms of assembly, homodimer.

It participates in purine metabolism; purine nucleotide biosynthesis [regulation]. In terms of biological role, is the main repressor of the genes involved in the de novo synthesis of purine nucleotides, regulating purB, purC, purEK, purF, purHD, purL, purMN and guaBA expression. PurR is allosterically activated to bind its cognate DNA by binding the purine corepressors, hypoxanthine or guanine, thereby effecting transcription repression. The protein is HTH-type transcriptional repressor PurR of Yersinia pseudotuberculosis serotype O:1b (strain IP 31758).